The following is a 536-amino-acid chain: Heat shock factor protein 2 (536 aa).

Glycyl lysine isopeptide (Lys-Gly) (interchain with G-Cter in SUMO2) cross-links involve residues Lys2 and Lys82. The DNA-binding element occupies 7-112; the sequence is VPAFLSKLWT…LLENIKRKVS (106 aa). The short motif at 108 to 122 is the Nuclear localization signal element; the sequence is KRKVSSSKPEENKIR. A hydrophobic repeat HR-A/B region spans residues 119-192; the sequence is NKIRQEDLTK…VTLVQNNQLV (74 aa). Glycyl lysine isopeptide (Lys-Gly) (interchain with G-Cter in SUMO2) cross-links involve residues Lys135, Lys139, Lys151, Lys210, Lys218, and Lys237. Residues 195 to 210 carry the Nuclear localization signal motif; sequence KRKRPLLLNTNGAQKK. The segment at 300–337 is disordered; it reads QSGEQNEPARESLSSGSDGSSPLMSSAVQLNGSSSLTS. The span at 311 to 325 shows a compositional bias: low complexity; sequence SLSSGSDGSSPLMSS. A compositionally biased stretch (polar residues) spans 326–337; it reads AVQLNGSSSLTS. Residues 360–385 are hydrophobic repeat HR-C; sequence LLDYLDSIDCSLEDFQAMLSGRQFSI. The tract at residues 407-438 is disordered; sequence NNTKSENKGLETTKNNVVQPVSEEGRKSKSKP. Residues 429 to 438 are compositionally biased toward basic and acidic residues; the sequence is EEGRKSKSKP.

Belongs to the HSF family. In terms of assembly, DNA-binding homotrimer in stressed or heat shocked cells, otherwise found as a homodimer.

Its subcellular location is the cytoplasm. The protein localises to the nucleus. DNA-binding protein that specifically binds heat shock promoter elements (HSE) and activates transcription. In higher eukaryotes, HSF is unable to bind to the HSE unless the cells are heat shocked. This chain is Heat shock factor protein 2 (HSF2), found in Homo sapiens (Human).